Consider the following 180-residue polypeptide: uncharacterized protein (180 aa).

Residues 35 to 163 (LRHRATYIVV…TPDSLKALAL (129 aa)) enclose the Nudix hydrolase domain. Positions 72–94 (GGVVQADEQLLESARREAEEELG) match the Nudix box motif. The Mg(2+) site is built by glutamate 88 and glutamate 92.

It belongs to the Nudix hydrolase family. Mg(2+) serves as cofactor.

This is an uncharacterized protein from Escherichia coli O157:H7.